The chain runs to 129 residues: Small ribosomal subunit protein uS11 (129 aa).

Belongs to the universal ribosomal protein uS11 family. As to quaternary structure, part of the 30S ribosomal subunit. Interacts with proteins S7 and S18. Binds to IF-3.

Functionally, located on the platform of the 30S subunit, it bridges several disparate RNA helices of the 16S rRNA. Forms part of the Shine-Dalgarno cleft in the 70S ribosome. The polypeptide is Small ribosomal subunit protein uS11 (Dinoroseobacter shibae (strain DSM 16493 / NCIMB 14021 / DFL 12)).